The primary structure comprises 1073 residues: uncharacterized protein (1073 aa).

Positions 1–36 (MAEIIHHSNVFTWAFHVSEYDGAPLLLLGSFSSVAS) are cleaved as a signal peptide. Asparagine 132 carries an N-linked (GlcNAc...) asparagine glycan. 392–399 (ATAGIGKS) is an ATP binding site. Asparagine 544, asparagine 632, asparagine 703, asparagine 732, and asparagine 953 each carry an N-linked (GlcNAc...) asparagine glycan.

This is an uncharacterized protein from Schizosaccharomyces pombe (strain 972 / ATCC 24843) (Fission yeast).